A 508-amino-acid chain; its full sequence is Photosystem II CP47 reaction center protein (508 aa).

A run of 6 helical transmembrane segments spans residues Ser-21 to Ser-36, Ile-101 to Trp-115, Gly-140 to Phe-156, Ile-203 to Ser-218, Val-237 to Val-252, and Ser-457 to Arg-472.

This sequence belongs to the PsbB/PsbC family. PsbB subfamily. As to quaternary structure, PSII is composed of 1 copy each of membrane proteins PsbA, PsbB, PsbC, PsbD, PsbE, PsbF, PsbH, PsbI, PsbJ, PsbK, PsbL, PsbM, PsbT, PsbX, PsbY, PsbZ, Psb30/Ycf12, at least 3 peripheral proteins of the oxygen-evolving complex and a large number of cofactors. It forms dimeric complexes. It depends on Binds multiple chlorophylls. PSII binds additional chlorophylls, carotenoids and specific lipids. as a cofactor.

Its subcellular location is the plastid. The protein localises to the chloroplast thylakoid membrane. In terms of biological role, one of the components of the core complex of photosystem II (PSII). It binds chlorophyll and helps catalyze the primary light-induced photochemical processes of PSII. PSII is a light-driven water:plastoquinone oxidoreductase, using light energy to abstract electrons from H(2)O, generating O(2) and a proton gradient subsequently used for ATP formation. The polypeptide is Photosystem II CP47 reaction center protein (Nymphaea alba (White water-lily)).